A 257-amino-acid polypeptide reads, in one-letter code: Imidazole glycerol phosphate synthase subunit HisF (257 aa).

Catalysis depends on residues Asp-12 and Asp-131.

The protein belongs to the HisA/HisF family. Heterodimer of HisH and HisF.

It localises to the cytoplasm. The enzyme catalyses 5-[(5-phospho-1-deoxy-D-ribulos-1-ylimino)methylamino]-1-(5-phospho-beta-D-ribosyl)imidazole-4-carboxamide + L-glutamine = D-erythro-1-(imidazol-4-yl)glycerol 3-phosphate + 5-amino-1-(5-phospho-beta-D-ribosyl)imidazole-4-carboxamide + L-glutamate + H(+). The protein operates within amino-acid biosynthesis; L-histidine biosynthesis; L-histidine from 5-phospho-alpha-D-ribose 1-diphosphate: step 5/9. Functionally, IGPS catalyzes the conversion of PRFAR and glutamine to IGP, AICAR and glutamate. The HisF subunit catalyzes the cyclization activity that produces IGP and AICAR from PRFAR using the ammonia provided by the HisH subunit. This chain is Imidazole glycerol phosphate synthase subunit HisF, found in Burkholderia orbicola (strain MC0-3).